The sequence spans 144 residues: Phospholipase A2 (144 aa).

Residues 1–15 form the signal peptide; sequence MKFLVLAALLTAGTA. The propeptide at 16-22 is activation peptide; the sequence is ASGVSPT. Cystine bridges form between Cys-33–Cys-99, Cys-49–Cys-144, Cys-51–Cys-67, Cys-66–Cys-127, Cys-73–Cys-120, Cys-83–Cys-113, and Cys-106–Cys-118. 3 residues coordinate Ca(2+): Tyr-50, Gly-52, and Gly-54. Residue His-70 is part of the active site. Residue Asp-71 coordinates Ca(2+). Asp-121 is a catalytic residue.

It belongs to the phospholipase A2 family. As to quaternary structure, monomer or homodimer. Requires Ca(2+) as cofactor. Post-translationally, activated by trypsin cleavage in the duodenum. Can also be activated by thrombin or autocatalytically.

The protein resides in the secreted. The enzyme catalyses a 1,2-diacyl-sn-glycero-3-phosphocholine + H2O = a 1-acyl-sn-glycero-3-phosphocholine + a fatty acid + H(+). It carries out the reaction 1,2-ditetradecanoyl-sn-glycero-3-phosphocholine + H2O = 1-tetradecanoyl-sn-glycero-3-phosphocholine + tetradecanoate + H(+). It catalyses the reaction 1,2-dihexadecanoyl-sn-glycero-3-phosphocholine + H2O = 1-hexadecanoyl-sn-glycero-3-phosphocholine + hexadecanoate + H(+). The catalysed reaction is 1-hexadecanoyl-2-(9Z-octadecenoyl)-sn-glycero-3-phosphocholine + H2O = 1-hexadecanoyl-sn-glycero-3-phosphocholine + (9Z)-octadecenoate + H(+). The enzyme catalyses 1-hexadecanoyl-2-(5Z,8Z,11Z,14Z-eicosatetraenoyl)-sn-glycero-3-phosphocholine + H2O = 1-hexadecanoyl-sn-glycero-3-phosphocholine + (5Z,8Z,11Z,14Z)-eicosatetraenoate + H(+). It carries out the reaction 1-hexadecanoyl-2-(9Z-octadecenoyl)-sn-glycero-3-phospho-(1'-sn-glycerol) + H2O = 1-hexadecanoyl-sn-glycero-3-phospho-(1'-sn-glycerol) + (9Z)-octadecenoate + H(+). It catalyses the reaction N-hexadecanoyl-1,2-di-(9Z-octadecenoyl)-sn-glycero-3-phosphoethanolamine + H2O = N-hexadecanoyl-1-(9Z-octadecenoyl)-sn-glycero-3-phosphoethanolamine + (9Z)-octadecenoate + H(+). The catalysed reaction is 1-hexadecanoyl-2-(9Z,12Z-octadecadienoyl)-sn-glycero-3-phosphoethanolamine + H2O = 1-hexadecanoyl-sn-glycero-3-phosphoethanolamine + (9Z,12Z)-octadecadienoate + H(+). The enzyme catalyses N,1-dihexadecanoyl-2-(9Z,12Z-octadecadienoyl)-sn-glycero-3-phosphoethanolamine + H2O = N,1-dihexadecanoyl-sn-glycero-3-phosphoethanolamine + (9Z,12Z)-octadecadienoate + H(+). Functionally, secretory calcium-dependent phospholipase A2 that primarily targets dietary phospholipids in the intestinal tract. Hydrolyzes the ester bond of the fatty acyl group attached at sn-2 position of phospholipids (phospholipase A2 activity) with preference for phosphatidylethanolamines and phosphatidylglycerols over phosphatidylcholines. May play a role in the biosynthesis of N-acyl ethanolamines that regulate energy metabolism and inflammation in the intestinal tract. Hydrolyzes N-acyl phosphatidylethanolamines to N-acyl lysophosphatidylethanolamines, which are further cleaved by a lysophospholipase D to release N-acyl ethanolamines. May act in an autocrine and paracrine manner. Has anti-helminth activity in a process regulated by gut microbiota. Upon helminth infection of intestinal epithelia, directly affects phosphatidylethanolamine contents in the membrane of helminth larvae, likely controlling an array of phospholipid-mediated cellular processes such as membrane fusion and cell division while providing for better immune recognition, ultimately reducing larvae integrity and infectivity. The sequence is that of Phospholipase A2 (PLA2G1B) from Oryctolagus cuniculus (Rabbit).